The chain runs to 171 residues: Adenine phosphoribosyltransferase (171 aa).

This sequence belongs to the purine/pyrimidine phosphoribosyltransferase family. In terms of assembly, homodimer.

The protein resides in the cytoplasm. The catalysed reaction is AMP + diphosphate = 5-phospho-alpha-D-ribose 1-diphosphate + adenine. Its pathway is purine metabolism; AMP biosynthesis via salvage pathway; AMP from adenine: step 1/1. Its function is as follows. Catalyzes a salvage reaction resulting in the formation of AMP, that is energically less costly than de novo synthesis. The chain is Adenine phosphoribosyltransferase from Synechococcus sp. (strain ATCC 27144 / PCC 6301 / SAUG 1402/1) (Anacystis nidulans).